The sequence spans 194 residues: dTTP/UTP pyrophosphatase (194 aa).

Aspartate 68 acts as the Proton acceptor in catalysis.

This sequence belongs to the Maf family. YhdE subfamily. It depends on a divalent metal cation as a cofactor.

The protein resides in the cytoplasm. The enzyme catalyses dTTP + H2O = dTMP + diphosphate + H(+). It catalyses the reaction UTP + H2O = UMP + diphosphate + H(+). In terms of biological role, nucleoside triphosphate pyrophosphatase that hydrolyzes dTTP and UTP. May have a dual role in cell division arrest and in preventing the incorporation of modified nucleotides into cellular nucleic acids. The polypeptide is dTTP/UTP pyrophosphatase (Clostridioides difficile (strain 630) (Peptoclostridium difficile)).